Reading from the N-terminus, the 345-residue chain is NADH-ubiquinone oxidoreductase chain 2 (345 aa).

9 consecutive transmembrane segments (helical) span residues 1–21 (MNPI…VLTM), 60–80 (FLIQ…NAHL), 110–130 (PIHF…ALII), 149–169 (IPTP…GLGG), 179–196 (MAFS…IITI), 200–222 (LTLF…MHLT), 240–260 (TANL…LSGF), 274–294 (NLVP…MFYL), and 323–343 (TTML…TPTM).

Belongs to the complex I subunit 2 family.

The protein localises to the mitochondrion inner membrane. It carries out the reaction a ubiquinone + NADH + 5 H(+)(in) = a ubiquinol + NAD(+) + 4 H(+)(out). In terms of biological role, core subunit of the mitochondrial membrane respiratory chain NADH dehydrogenase (Complex I) that is believed to belong to the minimal assembly required for catalysis. Complex I functions in the transfer of electrons from NADH to the respiratory chain. The immediate electron acceptor for the enzyme is believed to be ubiquinone. The protein is NADH-ubiquinone oxidoreductase chain 2 (MT-ND2) of Varanus melinus (Quince monitor lizard).